A 329-amino-acid chain; its full sequence is DNA-directed RNA polymerase subunit alpha (329 aa).

Residues 1 to 235 form an alpha N-terminal domain (alpha-NTD) region; the sequence is MQNSIIGFLK…EQLEAFVDLR (235 aa). Residues 249-329 are alpha C-terminal domain (alpha-CTD); that stretch reads FEPILLRPVD…KWPPSSILEE (81 aa).

Belongs to the RNA polymerase alpha chain family. In terms of assembly, homodimer. The RNAP catalytic core consists of 2 alpha, 1 beta, 1 beta' and 1 omega subunit. When a sigma factor is associated with the core the holoenzyme is formed, which can initiate transcription.

The catalysed reaction is RNA(n) + a ribonucleoside 5'-triphosphate = RNA(n+1) + diphosphate. Its function is as follows. DNA-dependent RNA polymerase catalyzes the transcription of DNA into RNA using the four ribonucleoside triphosphates as substrates. This Buchnera aphidicola subsp. Schizaphis graminum (strain Sg) protein is DNA-directed RNA polymerase subunit alpha.